We begin with the raw amino-acid sequence, 197 residues long: MDYNLDPSIAALIGYAFGSIPFGLLLTRMAGMGDVRSIGSGNIGATNVLRTGNKGLAALTLVLDLVKGFVPVWIAWRYFQNDIGWAALGAVVGHCFPIWLGFKGGKGVATNAGVCFGLGWGIGLAYAFVWLVMLAITRISSVAGMSAVVAAAGAAWYFGRPTFVPPLVIIAVIIIWLHRANIRRLLRGEEPRVGNKP.

The next 5 helical transmembrane spans lie at 7-27, 56-76, 82-102, 116-136, and 157-177; these read PSIAALIGYAFGSIPFGLLLT, LAALTLVLDLVKGFVPVWIAW, DIGWAALGAVVGHCFPIWLGF, FGLGWGIGLAYAFVWLVMLAI, and YFGRPTFVPPLVIIAVIIIWL.

Belongs to the PlsY family. As to quaternary structure, probably interacts with PlsX.

It is found in the cell inner membrane. It catalyses the reaction an acyl phosphate + sn-glycerol 3-phosphate = a 1-acyl-sn-glycero-3-phosphate + phosphate. The protein operates within lipid metabolism; phospholipid metabolism. Catalyzes the transfer of an acyl group from acyl-phosphate (acyl-PO(4)) to glycerol-3-phosphate (G3P) to form lysophosphatidic acid (LPA). This enzyme utilizes acyl-phosphate as fatty acyl donor, but not acyl-CoA or acyl-ACP. The chain is Glycerol-3-phosphate acyltransferase from Erythrobacter litoralis (strain HTCC2594).